A 277-amino-acid polypeptide reads, in one-letter code: Photosystem I assembly factor PSA3, chloroplastic (277 aa).

Residues 1–45 (MVVVTHISTSFHQISPSFFHLRLRNPSTTSSSRPKLDGGFALSIR) constitute a chloroplast transit peptide.

As to quaternary structure, interacts with PYG7.

Its subcellular location is the plastid. It is found in the chloroplast. The protein localises to the chloroplast thylakoid membrane. Nuclear genome-encoded factor required for the accumulation of photosystem I (PSI). Functions as a PSI biogenesis factor. Cooperates with PYG7 to promote the stable assembly of PSI in the thylakoid membrane. May target primarily the PsaC subunit. Does not seem to be required for the expression of chloroplast genes encoding PSI subunits. The sequence is that of Photosystem I assembly factor PSA3, chloroplastic from Arabidopsis thaliana (Mouse-ear cress).